A 153-amino-acid chain; its full sequence is Putative adenylate kinase (153 aa).

ATP is bound by residues G12, G14, K15, S16, and T17. Residues 31-47 form an NMP region; the sequence is EGNELAKEYGCLFDEEV. The LID stretch occupies residues 94 to 104; sequence ARGYSEEKIQE. Residue R95 participates in ATP binding.

Belongs to the adenylate kinase family. AK6 subfamily. Interacts with uS11. Not a structural component of 40S pre-ribosomes, but transiently interacts with them by binding to uS11.

It catalyses the reaction AMP + ATP = 2 ADP. It carries out the reaction ATP + H2O = ADP + phosphate + H(+). Functionally, broad-specificity nucleoside monophosphate (NMP) kinase that catalyzes the reversible transfer of the terminal phosphate group between nucleoside triphosphates and monophosphates. Also has ATPase activity. Involved in the late maturation steps of the 30S ribosomal particles, specifically 16S rRNA maturation. While NMP activity is not required for ribosome maturation, ATPase activity is. Associates transiently with small ribosomal subunit protein uS11. ATP hydrolysis breaks the interaction with uS11. May temporarily remove uS11 from the ribosome to enable a conformational change of the ribosomal RNA that is needed for the final maturation step of the small ribosomal subunit. This chain is Putative adenylate kinase, found in Thermoplasma volcanium (strain ATCC 51530 / DSM 4299 / JCM 9571 / NBRC 15438 / GSS1).